The following is a 394-amino-acid chain: Elongation factor Tu (394 aa).

Positions 10 to 204 (KPHVNIGTIG…AVDSYIPQPI (195 aa)) constitute a tr-type G domain. Residues 19-26 (GHVDHGKT) are G1. 19–26 (GHVDHGKT) contributes to the GTP binding site. Threonine 26 lines the Mg(2+) pocket. The G2 stretch occupies residues 60 to 64 (GITIS). Residues 81-84 (DCPG) are G3. GTP is bound by residues 81-85 (DCPGH) and 136-139 (NKVD). The interval 136 to 139 (NKVD) is G4. The segment at 174–176 (SAL) is G5.

It belongs to the TRAFAC class translation factor GTPase superfamily. Classic translation factor GTPase family. EF-Tu/EF-1A subfamily. Monomer.

Its subcellular location is the cytoplasm. The catalysed reaction is GTP + H2O = GDP + phosphate + H(+). GTP hydrolase that promotes the GTP-dependent binding of aminoacyl-tRNA to the A-site of ribosomes during protein biosynthesis. This chain is Elongation factor Tu, found in Rickettsia prowazekii (strain Madrid E).